The chain runs to 420 residues: MSNVRYTSNLTRETYALILAGGRGSRLHELTDWRAKPALYFGGKFRIIDFPLSNCINSGIRRVGVVTQYKSHSLIRHVMRGWGHFKKELGESVEILPASQRYSENWYQGTADAVFQNIDIIRHELPKYVMVLSGDHVYRMDYAGLLAAHAESGADMTVSCLEVPIAEAAGSFGVMEVDEEMRILGFEEKPQQPKHSPGNPEMCLASMGNYLFNTEFLFDQLKKDALNESSDRDFGKDIIPAIIEKHNVFAYPFKSAFPNEQAYWRDVGTLDSFWQANMELLSPTPALNLYDAKWPIWTFQEQLPPAKFVFDDDDRRGMALDSIVSGGCIISGATVRRSVLFNEVRVCSYSLVEDSVVLPDVVVLRHCKIKNAILDRGCIIPEGMVIGYNHDHDRAKGFRVSEKGVTLVTRDMLGLPVGYE.

Alpha-D-glucose 1-phosphate-binding positions include tyrosine 107, glycine 173, 188-189, and serine 206; that span reads EK.

This sequence belongs to the bacterial/plant glucose-1-phosphate adenylyltransferase family. As to quaternary structure, homotetramer.

The enzyme catalyses alpha-D-glucose 1-phosphate + ATP + H(+) = ADP-alpha-D-glucose + diphosphate. It functions in the pathway glycan biosynthesis; glycogen biosynthesis. In terms of biological role, involved in the biosynthesis of ADP-glucose, a building block required for the elongation reactions to produce glycogen. Catalyzes the reaction between ATP and alpha-D-glucose 1-phosphate (G1P) to produce pyrophosphate and ADP-Glc. The polypeptide is Glucose-1-phosphate adenylyltransferase (Shewanella baltica (strain OS155 / ATCC BAA-1091)).